Reading from the N-terminus, the 100-residue chain is uncharacterized protein (100 aa).

This is an uncharacterized protein from Acanthamoeba polyphaga mimivirus (APMV).